The sequence spans 779 residues: Vezatin (779 aa).

2 helical membrane passes run L139–M159 and T162–I182. Residues V430–E462 are a coiled coil. Disordered regions lie at residues P618–Q719 and E757–K779. Over residues I625 to S634 the composition is skewed to polar residues. A compositionally biased stretch (basic and acidic residues) spans K638–N649. The segment covering G706–Q719 has biased composition (polar residues). The span at E770 to K779 shows a compositional bias: basic and acidic residues.

It belongs to the vezatin family. Interacts with USH2A (via the cytoplasmic region); the interaction associates VEZT with the USH2 complex at the stereocilia base. Interacts with myosin MYO7A and the cadherin-catenins complex.

The protein localises to the cell membrane. Its subcellular location is the cell projection. It is found in the stereocilium membrane. It localises to the cell junction. The protein resides in the adherens junction. The protein localises to the nucleus. Its subcellular location is the cytoplasmic vesicle. It is found in the secretory vesicle. It localises to the acrosome. Its function is as follows. Plays a pivotal role in the establishment of adherens junctions and their maintenance in adult life. Required for morphogenesis of the preimplantation embryo, and for the implantation process. In terms of biological role, (Microbial infection) In case of Listeria infection, promotes bacterial internalization by participating in myosin VIIa recruitment to the entry site. This is Vezatin (VEZT) from Homo sapiens (Human).